The primary structure comprises 83 residues: Normal mucosa of esophagus-specific gene 1 protein (83 aa).

It belongs to the complex I NDUFA4 subunit family. In terms of tissue distribution, strongly expressed in vertebrae, brain, intestine and stomach.

The protein localises to the nucleus. The sequence is that of Normal mucosa of esophagus-specific gene 1 protein (Nmes1) from Mus musculus (Mouse).